An 852-amino-acid polypeptide reads, in one-letter code: Probable inorganic carbon transporter subunit DabA (852 aa).

Zn(2+) contacts are provided by Cys-370, Asp-372, His-554, and Cys-569.

It belongs to the inorganic carbon transporter (TC 9.A.2) DabA family. In terms of assembly, forms a complex with DabB. It depends on Zn(2+) as a cofactor.

It localises to the cell inner membrane. Its function is as follows. Part of an energy-coupled inorganic carbon pump. In Novosphingobium aromaticivorans (strain ATCC 700278 / DSM 12444 / CCUG 56034 / CIP 105152 / NBRC 16084 / F199), this protein is Probable inorganic carbon transporter subunit DabA.